A 545-amino-acid polypeptide reads, in one-letter code: Glucose-6-phosphate isomerase (545 aa).

The Proton donor role is filled by glutamate 351. Residues histidine 382 and lysine 510 contribute to the active site.

Belongs to the GPI family.

It is found in the cytoplasm. The enzyme catalyses alpha-D-glucose 6-phosphate = beta-D-fructose 6-phosphate. The protein operates within carbohydrate biosynthesis; gluconeogenesis. It participates in carbohydrate degradation; glycolysis; D-glyceraldehyde 3-phosphate and glycerone phosphate from D-glucose: step 2/4. Functionally, catalyzes the reversible isomerization of glucose-6-phosphate to fructose-6-phosphate. The chain is Glucose-6-phosphate isomerase from Helicobacter pylori (strain HPAG1).